Reading from the N-terminus, the 76-residue chain is MKLLLLLLTVTLLLAQVTPVMKCWGKSGRCRTTCKESEVYYILCKTEAKCCVDPKYVPVKPKLTDTNTSLESTSAV.

Residues 1–15 form the signal peptide; the sequence is MKLLLLLLTVTLLLA. Disulfide bonds link cysteine 23–cysteine 50, cysteine 30–cysteine 44, and cysteine 34–cysteine 51.

This sequence belongs to the beta-defensin family. As to expression, abundant expression in the male reproductive tract only.

The protein resides in the secreted. Its function is as follows. Has antibacterial activity. In Homo sapiens (Human), this protein is Beta-defensin 121 (DEFB121).